We begin with the raw amino-acid sequence, 432 residues long: Glutamate-1-semialdehyde 2,1-aminomutase (432 aa).

At Lys-267 the chain carries N6-(pyridoxal phosphate)lysine.

This sequence belongs to the class-III pyridoxal-phosphate-dependent aminotransferase family. HemL subfamily. As to quaternary structure, homodimer. It depends on pyridoxal 5'-phosphate as a cofactor.

It localises to the cytoplasm. It carries out the reaction (S)-4-amino-5-oxopentanoate = 5-aminolevulinate. It participates in porphyrin-containing compound metabolism; protoporphyrin-IX biosynthesis; 5-aminolevulinate from L-glutamyl-tRNA(Glu): step 2/2. This Syntrophus aciditrophicus (strain SB) protein is Glutamate-1-semialdehyde 2,1-aminomutase.